Reading from the N-terminus, the 526-residue chain is Dye-decolorizing peroxidase (526 aa).

The signal sequence occupies residues 1-21 (MRKSISTFILLSVLSVGQLVA). Positions 22-63 (ARPRSTNAPPRRRTPQPRRTTSLFINPPALPDLPTVQAVDKL) are excised as a propeptide. The N-linked (GlcNAc...) asparagine glycan is linked to asparagine 186. Residue aspartate 231 is the Proton acceptor of the active site. Asparagine 367 is a glycosylation site (N-linked (GlcNAc...) asparagine). Heme is bound at residue histidine 376. 2 N-linked (GlcNAc...) asparagine glycosylation sites follow: asparagine 473 and asparagine 484.

The protein belongs to the DyP-type peroxidase family. Heme b serves as cofactor.

The protein resides in the secreted. The catalysed reaction is Reactive Blue 5 + 2 H2O2 = 2,2'-disulfonyl azobenzene + 3-[(4-amino-6-chloro-1,3,5-triazin-2-yl)amino]benzenesulfonate + phthalate + 2 H2O + 2 H(+). The enzyme catalyses 2 a phenolic donor + H2O2 = 2 a phenolic radical donor + 2 H2O. Its function is as follows. Manganese-independent peroxidase that is able to convert a large number of compounds, but its physiological substrate is not known. In addition to classic peroxidase substrates (e.g. 2,6-dimethoxyphenol), oxidizes dyes such as Reactive Blue 5 and Reactive Black 5. This chain is Dye-decolorizing peroxidase, found in Mycena epipterygia (Yellow-stemmed mycena).